Consider the following 146-residue polypeptide: 3-dehydroquinate dehydratase (146 aa).

The active-site Proton acceptor is Tyr24. The substrate site is built by Asn73, His79, and Asp86. His99 functions as the Proton donor in the catalytic mechanism. Residues 100–101 (LS) and Arg110 each bind substrate.

Belongs to the type-II 3-dehydroquinase family. Homododecamer.

It carries out the reaction 3-dehydroquinate = 3-dehydroshikimate + H2O. It functions in the pathway metabolic intermediate biosynthesis; chorismate biosynthesis; chorismate from D-erythrose 4-phosphate and phosphoenolpyruvate: step 3/7. Its function is as follows. Catalyzes a trans-dehydration via an enolate intermediate. The polypeptide is 3-dehydroquinate dehydratase (Shewanella baltica (strain OS185)).